Consider the following 184-residue polypeptide: Casparian strip membrane protein 1 (184 aa).

At 1-24 (MKESGEHGETSKAPLNRGVSKGLS) the chain is on the cytoplasmic side. The helical transmembrane segment at 25–45 (VLDLILRFIAIIGTLASAIAM) threads the bilayer. Over 46–72 (GTTNETLPFFTQFIRFKAQYSDLPTLT) the chain is Extracellular. Asn-49 carries N-linked (GlcNAc...) asparagine glycosylation. Residues 73–93 (FFVVANSIVCAYLILSLPLSI) form a helical membrane-spanning segment. Residues 94–105 (VHIIRSRAKFSR) are Cytoplasmic-facing. Residues 106–126 (LLLIFLDAVMLALVTAGASAA) traverse the membrane as a helical segment. The Extracellular portion of the chain corresponds to 127 to 159 (AAIVYLAHKGNVRANWLAICQQFDSFCERISGS). Residues 160 to 180 (LIGSFGAMVVLILLILLSAIA) traverse the membrane as a helical segment. The Cytoplasmic portion of the chain corresponds to 181–184 (LARR).

It belongs to the Casparian strip membrane proteins (CASP) family. As to quaternary structure, homodimer and heterodimers.

It is found in the cell membrane. Functionally, regulates membrane-cell wall junctions and localized cell wall deposition. Required for establishment of the Casparian strip membrane domain (CSD) and the subsequent formation of Casparian strips, a cell wall modification of the root endodermis that determines an apoplastic barrier between the intraorganismal apoplasm and the extraorganismal apoplasm and prevents lateral diffusion. In Panicum virgatum (Blackwell switchgrass), this protein is Casparian strip membrane protein 1.